The chain runs to 155 residues: Ribosomal RNA large subunit methyltransferase H (155 aa).

Residues leucine 72, glycine 103, and 122-127 contribute to the S-adenosyl-L-methionine site; that span reads LSPLTL.

It belongs to the RNA methyltransferase RlmH family. As to quaternary structure, homodimer.

Its subcellular location is the cytoplasm. It carries out the reaction pseudouridine(1915) in 23S rRNA + S-adenosyl-L-methionine = N(3)-methylpseudouridine(1915) in 23S rRNA + S-adenosyl-L-homocysteine + H(+). Its function is as follows. Specifically methylates the pseudouridine at position 1915 (m3Psi1915) in 23S rRNA. The chain is Ribosomal RNA large subunit methyltransferase H from Histophilus somni (strain 2336) (Haemophilus somnus).